The primary structure comprises 394 residues: Elongation factor Tu (394 aa).

Residues 10 to 205 (KPHVNIGTIG…VDNWIPLPPR (196 aa)) enclose the tr-type G domain. The segment at 19–26 (GHVDHGKT) is G1. 19–26 (GHVDHGKT) serves as a coordination point for GTP. Thr-26 provides a ligand contact to Mg(2+). Residues 60–64 (GITIN) are G2. Residues 81-84 (DCPG) form a G3 region. GTP-binding positions include 81–85 (DCPGH) and 136–139 (NKCD). The tract at residues 136–139 (NKCD) is G4. The segment at 174–176 (SAL) is G5.

The protein belongs to the TRAFAC class translation factor GTPase superfamily. Classic translation factor GTPase family. EF-Tu/EF-1A subfamily. As to quaternary structure, monomer.

The protein resides in the cytoplasm. The enzyme catalyses GTP + H2O = GDP + phosphate + H(+). GTP hydrolase that promotes the GTP-dependent binding of aminoacyl-tRNA to the A-site of ribosomes during protein biosynthesis. This Bacteroides thetaiotaomicron (strain ATCC 29148 / DSM 2079 / JCM 5827 / CCUG 10774 / NCTC 10582 / VPI-5482 / E50) protein is Elongation factor Tu.